The chain runs to 469 residues: MGTVHARSLEPLPSSGPDFGGLGEEAEFVEVEPEAKQEILENKDVVVQHVHFDGLGRTKDDIIICEIGDVFKAKNLIEVMRKSHEAREKLLRLGIFRQVDVLIDTCQGDDALPNGLDVTFEVTELRRLTGSYNTMVGNNEGSMVLGLKLPNLLGRAEKVTFQFSYGTKETSYGLSFFKPRPGNFERNFSVNLYKVTGQFPWSSLRETDRGMSAEYSFPIWKTSHTVKWEGVWRELGCLSRTASFAVRKESGHSLKSSLSHAMVIDSRNSSILPRRGALLKVNQELAGYTGGDVSFIKEDFELQLNKQLIFDSVFSASFWGGMLVPIGDKPSSIADRFYLGGPTSIRGFSMHSIGPQSEGDYLGGEAYWAGGLHLYTPLPFRPGQGGFGELFRTHFFLNAGNLCNLNYGEGPKAHIRKLAECIRWSYGAGIVLRLGNIARLELNYCVPMGVQTGDRICDGVQFGAGIRFL.

The segment at 1–20 is disordered; it reads MGTVHARSLEPLPSSGPDFG. A POTRA domain is found at 45–125; the sequence is VVVQHVHFDG…LDVTFEVTEL (81 aa). The residue at position 255 (Lys-255) is an N6-methyllysine.

It belongs to the SAM50/omp85 family. Associates with the mitochondrial contact site and cristae organizing system (MICOS) complex, composed of at least MICOS10/MIC10, CHCHD3/MIC19, CHCHD6/MIC25, APOOL/MIC27, IMMT/MIC60, APOO/MIC23/MIC26 and QIL1/MIC13. This complex was also known under the names MINOS or MitOS complex. The MICOS complex associates with mitochondrial outer membrane proteins SAMM50, MTX1 and MTX2 (together described as components of the mitochondrial outer membrane sorting assembly machinery (SAM) complex) and DNAJC11, mitochondrial inner membrane protein TMEM11 and with HSPA9. The MICOS and SAM complexes together with DNAJC11 are part of a large protein complex spanning both membranes termed the mitochondrial intermembrane space bridging (MIB) complex. Interacts with CHCHD3/MIC19. Interacts with ARMC1. As to quaternary structure, (Microbial infection) Interacts with parasite T.gondii RH strain MAF1b1; the interaction is probably indirect and results in the disruption of the MIB complex and the formation of SPOTs (structures positive for outer mitochondrial membrane (OMM)), a cellular response to OMM stress, which leads to the constitutive shedding of OMM vesicles.

It is found in the mitochondrion outer membrane. The protein localises to the cytoplasm. Its subcellular location is the mitochondrion. Functionally, plays a crucial role in the maintenance of the structure of mitochondrial cristae and the proper assembly of the mitochondrial respiratory chain complexes. Required for the assembly of TOMM40 into the TOM complex. The chain is Sorting and assembly machinery component 50 homolog (SAMM50) from Homo sapiens (Human).